A 536-amino-acid chain; its full sequence is Probable pectinesterase/pectinesterase inhibitor 59 (536 aa).

Positions 1-30 (MNMMMQKLSILFLHLILLVLLCVHPLTTVA) are cleaved as a signal peptide. A pectinesterase inhibitor 59 region spans residues 31-183 (DRNSTDWCDK…SHLISNCLAV (153 aa)). N-linked (GlcNAc...) asparagine glycans are attached at residues N33, N91, N116, N159, and N195. The interval 221–522 (NLVVAKDGSG…FTVGKFIAGT (302 aa)) is pectinesterase 59. 2 residues coordinate substrate: T298 and Q328. The active-site Proton donor; for pectinesterase activity is the D351. An intrachain disulfide couples C365 to C385. The active-site Nucleophile; for pectinesterase activity is the D372. Substrate-binding residues include R440 and W442.

This sequence in the N-terminal section; belongs to the PMEI family. It in the C-terminal section; belongs to the pectinesterase family. In terms of tissue distribution, expressed in siliques.

It is found in the secreted. It localises to the cell wall. It carries out the reaction [(1-&gt;4)-alpha-D-galacturonosyl methyl ester](n) + n H2O = [(1-&gt;4)-alpha-D-galacturonosyl](n) + n methanol + n H(+). The protein operates within glycan metabolism; pectin degradation; 2-dehydro-3-deoxy-D-gluconate from pectin: step 1/5. Its function is as follows. Acts in the modification of cell walls via demethylesterification of cell wall pectin. The polypeptide is Probable pectinesterase/pectinesterase inhibitor 59 (PME59) (Arabidopsis thaliana (Mouse-ear cress)).